The primary structure comprises 55 residues: Glycine-rich antimicrobial peptide Pg-AMP (55 aa).

Residues 18-39 show a composition bias toward gly residues; it reads GYGGYGGGRYGGGYGSGRGQPV. Positions 18–55 are disordered; that stretch reads GYGGYGGGRYGGGYGSGRGQPVGQGVERSHDDNRNQPR. Residues 44 to 55 show a composition bias toward basic and acidic residues; it reads ERSHDDNRNQPR.

As to quaternary structure, monomer and homodimer. Might act by homodimer formation.

In terms of biological role, has antibacterial activity against the Gram-negative bacteria Klebsiella sp., Proteus sp., E.coli ATCC 8739 (MIC=72 ug/ml) and K.pneumoniae (MIC=32 ug/ml). Has no activity against the Gram-negative bacterium S.typhimurium or the Gram-positive bacterium S.aureus. Does not have antifungal activity against the human and plant pathogenic fungi F.oxysporum, A.fumigatus and R.solani. This chain is Glycine-rich antimicrobial peptide Pg-AMP, found in Psidium guajava (Guava).